Consider the following 1954-residue polypeptide: Chromodomain-helicase-DNA-binding protein 5 (1954 aa).

Disordered stretches follow at residues methionine 1–serine 134 and proline 225–tyrosine 338. Composition is skewed to acidic residues over residues glutamate 17–aspartate 37 and asparagine 72–glycine 90. A compositionally biased stretch (basic residues) spans asparagine 96 to lysine 115. Positions alanine 227–valine 237 are enriched in pro residues. Residues glycine 251 to alanine 272 show a composition bias toward basic residues. Over residues serine 291–phenylalanine 301 the composition is skewed to acidic residues. The span at lysine 321–lysine 330 shows a compositional bias: basic residues. PHD-type zinc fingers lie at residues glutamine 343 to glutamate 390 and methionine 416 to proline 463. Residues glutamine 343–threonine 653 are histone-binding. The 58-residue stretch at leucine 497 to phenylalanine 554 folds into the Chromo 1 domain. Residues aspartate 549–lysine 571 form a disordered region. The segment covering glutamate 561–lysine 571 has biased composition (basic and acidic residues). The Chromo 2 domain occupies methionine 592–threonine 653. The Helicase ATP-binding domain occupies arginine 712–glutamate 896. ATP is bound at residue aspartate 725–threonine 732. Positions aspartate 847–histidine 850 match the DEAH box motif. One can recognise a Helicase C-terminal domain in the interval leucine 1028–leucine 1193. 5 disordered regions span residues methionine 1209–serine 1253, tyrosine 1351–leucine 1411, tyrosine 1524–glycine 1564, alanine 1597–valine 1640, and serine 1658–aspartate 1696. Acidic residues-rich tracts occupy residues serine 1355–serine 1366 and serine 1376–glutamate 1385. Residue glutamine 1390 is modified to N5-methylglutamine. Serine 1554 is modified (phosphoserine). The segment covering serine 1554–glycine 1564 has biased composition (low complexity). Composition is skewed to basic and acidic residues over residues aspartate 1600 to lysine 1627 and serine 1658 to isoleucine 1678.

Belongs to the SNF2/RAD54 helicase family. Component of the nucleosome remodeling and deacetylase (NuRD) repressor complex, composed of core proteins MTA1, MTA2, MTA3, RBBP4, RBBP7, HDAC1, HDAC2, MBD2, MBD3, and peripherally associated proteins CDK2AP1, CDK2AP2, GATAD2A, GATAD2B, CHD3, CHD4 and CHD5. The exact stoichiometry of the NuRD complex is unknown, and some subunits such as MBD2 and MBD3, GATAD2A and GATAD2B, and CHD3, CHD4 and CHD5 define mutually exclusive NuRD complexes. Interacts with HDAC2. Post-translationally, methylated at Gln-1390 by N6AMT1. In terms of tissue distribution, preferentially expressed in total brain, fetal brain, and cerebellum. It is also moderately expressed in the adrenal gland and detected in testis.

The protein localises to the nucleus. It localises to the chromosome. It catalyses the reaction ATP + H2O = ADP + phosphate + H(+). In terms of biological role, ATP-dependent chromatin-remodeling factor that binds DNA through histones and regulates gene transcription. May specifically recognize and bind trimethylated 'Lys-27' (H3K27me3) and non-methylated 'Lys-4' of histone H3. Acts as a component of the histone deacetylase NuRD complex which participates in the remodeling of chromatin. Plays a role in the development of the nervous system by activating the expression of genes promoting neuron terminal differentiation. In parallel, it may also positively regulate the trimethylation of histone H3 at 'Lys-27' thereby specifically repressing genes that promote the differentiation into non-neuronal cell lineages. Regulates the expression of genes involved in cell proliferation and differentiation. Downstream activated genes may include CDKN2A that positively regulates the p53/TP53 pathway, which in turn, prevents cell proliferation. In spermatogenesis, it probably regulates histone hyperacetylation and the replacement of histones by transition proteins in chromatin, a crucial step in the condensation of spermatid chromatin and the production of functional spermatozoa. This Homo sapiens (Human) protein is Chromodomain-helicase-DNA-binding protein 5.